Reading from the N-terminus, the 684-residue chain is Glycine--tRNA ligase beta subunit (684 aa).

This sequence belongs to the class-II aminoacyl-tRNA synthetase family. As to quaternary structure, tetramer of two alpha and two beta subunits.

It localises to the cytoplasm. The catalysed reaction is tRNA(Gly) + glycine + ATP = glycyl-tRNA(Gly) + AMP + diphosphate. The chain is Glycine--tRNA ligase beta subunit from Ectopseudomonas mendocina (strain ymp) (Pseudomonas mendocina).